The primary structure comprises 699 residues: Elongation factor G (699 aa).

In terms of domain architecture, tr-type G spans Asn-8–Asp-290. Residues Ala-17–Thr-24, Asp-88–His-92, and Asn-142–Asp-145 each bind GTP.

It belongs to the TRAFAC class translation factor GTPase superfamily. Classic translation factor GTPase family. EF-G/EF-2 subfamily.

Its subcellular location is the cytoplasm. Catalyzes the GTP-dependent ribosomal translocation step during translation elongation. During this step, the ribosome changes from the pre-translocational (PRE) to the post-translocational (POST) state as the newly formed A-site-bound peptidyl-tRNA and P-site-bound deacylated tRNA move to the P and E sites, respectively. Catalyzes the coordinated movement of the two tRNA molecules, the mRNA and conformational changes in the ribosome. This Alcanivorax borkumensis (strain ATCC 700651 / DSM 11573 / NCIMB 13689 / SK2) protein is Elongation factor G.